We begin with the raw amino-acid sequence, 350 residues long: Twinfilin-1 (350 aa).

ADF-H domains are found at residues 4-139 (QTGI…KYLA) and 177-313 (GIAF…EEVH). Residues 316–350 (QHAHKQNFAKPKGPAGKRGIRRLIRGPAEAETAND) form a disordered region.

It belongs to the actin-binding proteins ADF family. Twinfilin subfamily. Interacts with G-actin; ADP-actin form.

The protein localises to the cytoplasm. The protein resides in the cytoskeleton. Functionally, actin-binding protein involved in motile and morphological processes. Inhibits actin polymerization, likely by sequestering G-actin. The protein is Twinfilin-1 (twf1) of Xenopus tropicalis (Western clawed frog).